The chain runs to 137 residues: Insulin-like peptide 2 (137 aa).

The signal sequence occupies residues 1 to 26 (MSKPLSFISMVAVILLASSTVKLAQG). Disulfide bonds link cysteine 29/cysteine 119, cysteine 41/cysteine 132, and cysteine 118/cysteine 123. The propeptide at 53 to 104 (AMPGADSDLDALNPLQFVQEFEEEDNSISEPLRSALFPGSYLGGVLNSLAEV) is connecting peptide.

The protein belongs to the insulin family. As to quaternary structure, heterodimer of a B chain and an A chain linked by two disulfide bonds. As to expression, broadly expressed at a low level in the embryonic mesoderm, beginning at stage 12. Expressed at a high level in the embryonic anterior midgut, with expression diminishing at late stage 16. Expressed at a low level in larval imaginal disks. Expressed at a high level in larval salivary glands and in seven cells of each larval brain hemisphere that may correspond to neurosecretory cells.

It is found in the secreted. Its function is as follows. Possible ligand of InR/insulin-like receptor. Plays a role in regulating body size by increasing cell size and cell number of individual organs. Probably mediates its growth effects by acting as a ligand for the insulin receptor and transducing a signal via the Chico/PI3K/Akt(PKB) pathway. In Drosophila melanogaster (Fruit fly), this protein is Insulin-like peptide 2.